A 287-amino-acid chain; its full sequence is Shikimate kinase 3, chloroplastic (287 aa).

Residues 1-57 (MDAGVGLRAKPGAWAGLGNPRRSSTARVPVRFAVEKFAQPLVLGSDRRSCGAKLKVS) constitute a chloroplast transit peptide. 98–105 (GMMGSGKT) contributes to the ATP binding site. Thr105 lines the Mg(2+) pocket. Asp123, Arg148, and Gly170 together coordinate substrate. Arg209 provides a ligand contact to ATP.

This sequence belongs to the shikimate kinase family. Requires Mg(2+) as cofactor. As to expression, expressed in panicles.

It is found in the plastid. It localises to the chloroplast. The enzyme catalyses shikimate + ATP = 3-phosphoshikimate + ADP + H(+). Its pathway is metabolic intermediate biosynthesis; chorismate biosynthesis; chorismate from D-erythrose 4-phosphate and phosphoenolpyruvate: step 5/7. In terms of biological role, catalyzes the specific phosphorylation of the 3-hydroxyl group of shikimic acid using ATP as a cosubstrate. This chain is Shikimate kinase 3, chloroplastic (SK3), found in Oryza sativa subsp. japonica (Rice).